Reading from the N-terminus, the 378-residue chain is Lipid-A-disaccharide synthase (378 aa).

This sequence belongs to the LpxB family.

The catalysed reaction is a lipid X + a UDP-2-N,3-O-bis[(3R)-3-hydroxyacyl]-alpha-D-glucosamine = a lipid A disaccharide + UDP + H(+). The protein operates within bacterial outer membrane biogenesis; LPS lipid A biosynthesis. Its function is as follows. Condensation of UDP-2,3-diacylglucosamine and 2,3-diacylglucosamine-1-phosphate to form lipid A disaccharide, a precursor of lipid A, a phosphorylated glycolipid that anchors the lipopolysaccharide to the outer membrane of the cell. The protein is Lipid-A-disaccharide synthase of Methylobacillus flagellatus (strain ATCC 51484 / DSM 6875 / VKM B-1610 / KT).